Here is a 137-residue protein sequence, read N- to C-terminus: Small ribosomal subunit protein uS12 (137 aa).

Position 102 is a 3-methylthioaspartic acid (aspartate 102).

This sequence belongs to the universal ribosomal protein uS12 family. As to quaternary structure, part of the 30S ribosomal subunit. Contacts proteins S8 and S17. May interact with IF1 in the 30S initiation complex.

In terms of biological role, with S4 and S5 plays an important role in translational accuracy. Its function is as follows. Interacts with and stabilizes bases of the 16S rRNA that are involved in tRNA selection in the A site and with the mRNA backbone. Located at the interface of the 30S and 50S subunits, it traverses the body of the 30S subunit contacting proteins on the other side and probably holding the rRNA structure together. The combined cluster of proteins S8, S12 and S17 appears to hold together the shoulder and platform of the 30S subunit. The chain is Small ribosomal subunit protein uS12 from Mycoplasmopsis agalactiae (strain NCTC 10123 / CIP 59.7 / PG2) (Mycoplasma agalactiae).